The sequence spans 349 residues: tRNA pseudouridine synthase D (349 aa).

Phenylalanine 27 is a binding site for substrate. Catalysis depends on aspartate 80, which acts as the Nucleophile. A substrate-binding site is contributed by asparagine 129. Residues 155 to 303 (GVPNYFGAQR…VEAARRAMLL (149 aa)) enclose the TRUD domain. Position 329 (phenylalanine 329) interacts with substrate.

It belongs to the pseudouridine synthase TruD family.

It carries out the reaction uridine(13) in tRNA = pseudouridine(13) in tRNA. In terms of biological role, responsible for synthesis of pseudouridine from uracil-13 in transfer RNAs. In Klebsiella pneumoniae (strain 342), this protein is tRNA pseudouridine synthase D.